Here is a 1138-residue protein sequence, read N- to C-terminus: Nuclear pore complex-interacting protein family member B13 (1138 aa).

Residues 73–93 form a helical membrane-spanning segment; sequence VVITLWIVYLWVSLLKTIFWS. Disordered regions lie at residues 242-578 and 747-1138; these read RMGH…NIKT and ERLR…RRLS. A compositionally biased stretch (polar residues) spans 252-263; the sequence is QQHSITDNSLSL. Residues 349 to 359 show a composition bias toward pro residues; it reads PLPPSAPPSAP. Basic and acidic residues-rich tracts occupy residues 406 to 416, 448 to 458, 490 to 500, 532 to 542, 782 to 792, 824 to 834, 866 to 876, 908 to 918, 950 to 960, and 992 to 1002; these read DNIKTPAERLR.

Belongs to the NPIP family.

The protein resides in the membrane. The chain is Nuclear pore complex-interacting protein family member B13 from Homo sapiens (Human).